The primary structure comprises 403 residues: Tryptophan synthase beta chain (403 aa).

Lysine 96 is subject to N6-(pyridoxal phosphate)lysine.

This sequence belongs to the TrpB family. As to quaternary structure, tetramer of two alpha and two beta chains. Requires pyridoxal 5'-phosphate as cofactor.

The enzyme catalyses (1S,2R)-1-C-(indol-3-yl)glycerol 3-phosphate + L-serine = D-glyceraldehyde 3-phosphate + L-tryptophan + H2O. Its pathway is amino-acid biosynthesis; L-tryptophan biosynthesis; L-tryptophan from chorismate: step 5/5. In terms of biological role, the beta subunit is responsible for the synthesis of L-tryptophan from indole and L-serine. This is Tryptophan synthase beta chain from Ralstonia nicotianae (strain ATCC BAA-1114 / GMI1000) (Ralstonia solanacearum).